A 783-amino-acid polypeptide reads, in one-letter code: MSETPNTNEQNNPNNQQDGTGQNPMPPMPTGKPQMPERPERHNQADGAPKRPGDDDRKSERPTWLSEFSDKEEDFASRLNTRPPQRASIITIIIIFLVAFFIGSQMMNMVHGEETDDLTTSEFVQAVEQGRVENVVYNAGEYTVTGKYYPAATAGSTIAESYNSAIESVDVKLGTILEPSNPSSVGIETTSLEEKTLGTERNYTATYVGQDSLMELLSAHPEVEYQVTLPSNVTEILISVLPMLLFAGLLIYFFSQMSKANNSQMSFGKAKAKKTTEERPDVRFSDVAGEDEAVEELQEIKDFLVNPGKYQKLGAKIPRGCLLVGPPGTGKTLLARAVAGEANVPFFSISGSEFVEMFVGVGASRVRNLFEQAKEAAPSIIFIDEIDAVGRQRGTGLGGGHDEREQTLNQLLVEMDGFEKNDAVVLIAATNRVDVLDPALLRPGRFDRQIVVDGPDVKGRVKILEVHAKNKPIGEDVDLERIAKLTSGMTGADLMNLMNEAALLTARRNKDKIGMDEVNESMERLMAGPERKTRVLNEKTRRTIAYHESGHALVGHMLENADPVHKITIVPRGMALGYTMSIPDEDKFLVSRSAMLDELAVFMGGRVAEEIFCGDITTGASNDLERATKTARKMVVSYGMSEALGQQTFGQPNHEVFLGRDYGNTQDYSPETAQRIDEEVARLMKEAHDTAYEILSARQEQMHTMAKVLLERETVDGEECQALLNNTWDEFLAKKQAEAAAKAADQAEQPQVEAEPVAQVATPAAPVAPAVPEAPQPPAAPQQ.

Residues Met-1–Gln-16 show a composition bias toward low complexity. Residues Met-1–Leu-79 form a disordered region. Residues Met-1–Arg-86 lie on the Cytoplasmic side of the membrane. The segment covering Met-35 to Arg-61 has biased composition (basic and acidic residues). A helical membrane pass occupies residues Ala-87–Met-107. Over Asn-108 to Val-233 the chain is Extracellular. Residues Thr-234–Phe-254 traverse the membrane as a helical segment. Residues Ser-255–Gln-783 are Cytoplasmic-facing. ATP is bound at residue Gly-325–Thr-332. His-547 contacts Zn(2+). Glu-548 is a catalytic residue. Residues His-551 and Asp-623 each contribute to the Zn(2+) site. Low complexity predominate over residues Glu-738–Val-771. Positions Glu-738–Gln-783 are disordered. Pro residues predominate over residues Pro-772–Gln-783.

The protein in the central section; belongs to the AAA ATPase family. This sequence in the C-terminal section; belongs to the peptidase M41 family. As to quaternary structure, homohexamer. Requires Zn(2+) as cofactor.

It localises to the cell membrane. Its function is as follows. Acts as a processive, ATP-dependent zinc metallopeptidase for both cytoplasmic and membrane proteins. Plays a role in the quality control of integral membrane proteins. This chain is ATP-dependent zinc metalloprotease FtsH, found in Slackia heliotrinireducens (strain ATCC 29202 / DSM 20476 / NCTC 11029 / RHS 1) (Peptococcus heliotrinreducens).